A 448-amino-acid polypeptide reads, in one-letter code: Exodeoxyribonuclease 7 large subunit (448 aa).

The protein belongs to the XseA family. Heterooligomer composed of large and small subunits.

The protein localises to the cytoplasm. The catalysed reaction is Exonucleolytic cleavage in either 5'- to 3'- or 3'- to 5'-direction to yield nucleoside 5'-phosphates.. Functionally, bidirectionally degrades single-stranded DNA into large acid-insoluble oligonucleotides, which are then degraded further into small acid-soluble oligonucleotides. The polypeptide is Exodeoxyribonuclease 7 large subunit (Enterococcus faecalis (strain ATCC 700802 / V583)).